A 126-amino-acid polypeptide reads, in one-letter code: Holo-[acyl-carrier-protein] synthase (126 aa).

Residues Asp-9 and Glu-58 each coordinate Mg(2+).

This sequence belongs to the P-Pant transferase superfamily. AcpS family. Mg(2+) is required as a cofactor.

It localises to the cytoplasm. It carries out the reaction apo-[ACP] + CoA = holo-[ACP] + adenosine 3',5'-bisphosphate + H(+). Transfers the 4'-phosphopantetheine moiety from coenzyme A to a Ser of acyl-carrier-protein. This chain is Holo-[acyl-carrier-protein] synthase, found in Vibrio vulnificus (strain CMCP6).